Consider the following 763-residue polypeptide: Protein translocase subunit SecA 2 (763 aa).

ATP is bound by residues Q83, 101–105 (GEGKT), and D490.

This sequence belongs to the SecA family. Monomer and homodimer. Part of the essential Sec protein translocation apparatus which comprises SecA, SecYEG and auxiliary proteins SecDF. Other proteins may also be involved.

The protein localises to the cell membrane. Its subcellular location is the cytoplasm. It catalyses the reaction ATP + H2O + cellular proteinSide 1 = ADP + phosphate + cellular proteinSide 2.. Part of the Sec protein translocase complex. Interacts with the SecYEG preprotein conducting channel. Has a central role in coupling the hydrolysis of ATP to the transfer of proteins into and across the cell membrane, serving as an ATP-driven molecular motor driving the stepwise translocation of polypeptide chains across the membrane. This Corynebacterium efficiens (strain DSM 44549 / YS-314 / AJ 12310 / JCM 11189 / NBRC 100395) protein is Protein translocase subunit SecA 2.